We begin with the raw amino-acid sequence, 158 residues long: Arginine repressor (158 aa).

Belongs to the ArgR family.

Its subcellular location is the cytoplasm. The protein operates within amino-acid biosynthesis; L-arginine biosynthesis [regulation]. Functionally, regulates arginine biosynthesis genes. The polypeptide is Arginine repressor (Anaeromyxobacter sp. (strain Fw109-5)).